Consider the following 491-residue polypeptide: MTTWDKCLKKIKKNLSTFEYKTWIKPIHVEQNSNLFTVYCNNEYFKKHIKSKYGNLILSTIQECHGNDLIIEYSNKKFSGEKITEVITAGPQANFFSTTSVEIKDESEDTKVVQEPKISNKSNSKDFSSSQELFGFDEAMLITAKEDEEYSFGLPLKEKYVFDSFVVGDANKIARAAAMQVSINPGKLHNPLFIYGGSGLGKTHLMQAIGNHAREVNPNAKIIYTNSEQFIKDYVNSIRLQDQDEFQRVYRSADILLIDDIQFIAGKEGTAQEFFHTFNALYENGKQIILTSDKYPNEIEGLEERLVSRFGYGLTVSVDMPDLETRIAILLKKAHDLGQKLPNETAAFIAENVRTNVRELEGALNRVLTTSKFNHKDPTIEVAQACLRDVIKIQEKKVKIDNIQKVVADFYRIRVKDLTSNQRSRNIARPRQIAMSLARELTSHSLPEIGNAFGGRDHTTVMHAVKAITKLRQSNTSISDDYELLLDKISR.

Residues 1–69 (MTTWDKCLKK…TIQECHGNDL (69 aa)) form a domain I, interacts with DnaA modulators region. Residues 69–154 (LIIEYSNKKF…KEDEEYSFGL (86 aa)) form a domain II region. The domain III, AAA+ region stretch occupies residues 155–371 (PLKEKYVFDS…GALNRVLTTS (217 aa)). Positions 199, 201, 202, and 203 each coordinate ATP. Positions 372-491 (KFNHKDPTIE…YELLLDKISR (120 aa)) are domain IV, binds dsDNA.

It belongs to the DnaA family. Oligomerizes as a right-handed, spiral filament on DNA at oriC.

The protein localises to the cytoplasm. Its function is as follows. Plays an essential role in the initiation and regulation of chromosomal replication. ATP-DnaA binds to the origin of replication (oriC) to initiate formation of the DNA replication initiation complex once per cell cycle. Binds the DnaA box (a 9 base pair repeat at the origin) and separates the double-stranded (ds)DNA. Forms a right-handed helical filament on oriC DNA; dsDNA binds to the exterior of the filament while single-stranded (ss)DNA is stabiized in the filament's interior. The ATP-DnaA-oriC complex binds and stabilizes one strand of the AT-rich DNA unwinding element (DUE), permitting loading of DNA polymerase. After initiation quickly degrades to an ADP-DnaA complex that is not apt for DNA replication. Binds acidic phospholipids. In Francisella tularensis subsp. holarctica (strain OSU18), this protein is Chromosomal replication initiator protein DnaA.